A 20-amino-acid polypeptide reads, in one-letter code: Hemocyanin subunit 6 (20 aa).

This sequence belongs to the tyrosinase family. Hemocyanin subfamily. As to expression, hemolymph.

The protein localises to the secreted. The protein resides in the extracellular space. Hemocyanins are copper-containing oxygen carriers occurring freely dissolved in the hemolymph of many mollusks and arthropods. The polypeptide is Hemocyanin subunit 6 (Homarus americanus (American lobster)).